The primary structure comprises 523 residues: ATP synthase subunit alpha (523 aa).

179–186 (GDRQTGKT) serves as a coordination point for ATP.

This sequence belongs to the ATPase alpha/beta chains family. F-type ATPases have 2 components, CF(1) - the catalytic core - and CF(0) - the membrane proton channel. CF(1) has five subunits: alpha(3), beta(3), gamma(1), delta(1), epsilon(1). CF(0) has three main subunits: a(1), b(2) and c(9-12). The alpha and beta chains form an alternating ring which encloses part of the gamma chain. CF(1) is attached to CF(0) by a central stalk formed by the gamma and epsilon chains, while a peripheral stalk is formed by the delta and b chains.

It is found in the cell inner membrane. The catalysed reaction is ATP + H2O + 4 H(+)(in) = ADP + phosphate + 5 H(+)(out). Its function is as follows. Produces ATP from ADP in the presence of a proton gradient across the membrane. The alpha chain is a regulatory subunit. The protein is ATP synthase subunit alpha of Vibrio parahaemolyticus serotype O3:K6 (strain RIMD 2210633).